We begin with the raw amino-acid sequence, 251 residues long: Cell division protein ZapD (251 aa).

The protein belongs to the ZapD family. As to quaternary structure, interacts with FtsZ.

Its subcellular location is the cytoplasm. Functionally, cell division factor that enhances FtsZ-ring assembly. Directly interacts with FtsZ and promotes bundling of FtsZ protofilaments, with a reduction in FtsZ GTPase activity. In Burkholderia vietnamiensis (strain G4 / LMG 22486) (Burkholderia cepacia (strain R1808)), this protein is Cell division protein ZapD.